Here is a 390-residue protein sequence, read N- to C-terminus: Flagellar P-ring protein (390 aa).

An N-terminal signal peptide occupies residues 1–25; the sequence is MLLKKIFLTGIIVLDLVFFVSYGFA.

This sequence belongs to the FlgI family. In terms of assembly, the basal body constitutes a major portion of the flagellar organelle and consists of four rings (L,P,S, and M) mounted on a central rod.

It localises to the periplasm. Its subcellular location is the bacterial flagellum basal body. Its function is as follows. Assembles around the rod to form the L-ring and probably protects the motor/basal body from shearing forces during rotation. This chain is Flagellar P-ring protein, found in Syntrophus aciditrophicus (strain SB).